A 65-amino-acid chain; its full sequence is Large ribosomal subunit protein bL35 (65 aa).

A disordered region spans residues Met1 to Thr46. Basic residues predominate over residues Lys21 to Leu44.

Belongs to the bacterial ribosomal protein bL35 family.

The chain is Large ribosomal subunit protein bL35 from Gloeobacter violaceus (strain ATCC 29082 / PCC 7421).